The primary structure comprises 318 residues: Acetyl-coenzyme A carboxylase carboxyl transferase subunit alpha (318 aa).

The CoA carboxyltransferase C-terminal domain maps to asparagine 32–arginine 293.

It belongs to the AccA family. In terms of assembly, acetyl-CoA carboxylase is a heterohexamer composed of biotin carboxyl carrier protein (AccB), biotin carboxylase (AccC) and two subunits each of ACCase subunit alpha (AccA) and ACCase subunit beta (AccD).

Its subcellular location is the cytoplasm. The enzyme catalyses N(6)-carboxybiotinyl-L-lysyl-[protein] + acetyl-CoA = N(6)-biotinyl-L-lysyl-[protein] + malonyl-CoA. The protein operates within lipid metabolism; malonyl-CoA biosynthesis; malonyl-CoA from acetyl-CoA: step 1/1. Component of the acetyl coenzyme A carboxylase (ACC) complex. First, biotin carboxylase catalyzes the carboxylation of biotin on its carrier protein (BCCP) and then the CO(2) group is transferred by the carboxyltransferase to acetyl-CoA to form malonyl-CoA. This Saccharophagus degradans (strain 2-40 / ATCC 43961 / DSM 17024) protein is Acetyl-coenzyme A carboxylase carboxyl transferase subunit alpha.